Here is a 364-residue protein sequence, read N- to C-terminus: 3-methyl-2-oxobutanoate hydroxymethyltransferase 1, mitochondrial (364 aa).

The transit peptide at 1 to 59 (MMMMMRRAFRHLARQQRRPLSHVPESAVYGGPRPQDVGAAAGAGAGAGATRRVTVTTLR) directs the protein to the mitochondrion. The Mg(2+) site is built by D94 and D133. 3-methyl-2-oxobutanoate is bound by residues 94-95 (DS), D133, and K163. E165 is a Mg(2+) binding site. The Proton acceptor role is filled by E233.

The protein belongs to the PanB family. Mg(2+) is required as a cofactor.

The protein localises to the mitochondrion. It carries out the reaction 3-methyl-2-oxobutanoate + (6R)-5,10-methylene-5,6,7,8-tetrahydrofolate + H2O = 2-dehydropantoate + (6S)-5,6,7,8-tetrahydrofolate. It participates in cofactor biosynthesis; (R)-pantothenate biosynthesis; (R)-pantoate from 3-methyl-2-oxobutanoate: step 1/2. In terms of biological role, catalyzes the reversible reaction in which hydroxymethyl group from 5,10-methylenetetrahydrofolate is transferred onto alpha-ketoisovalerate to form ketopantoate. The chain is 3-methyl-2-oxobutanoate hydroxymethyltransferase 1, mitochondrial (KPHMT1) from Oryza sativa subsp. japonica (Rice).